A 410-amino-acid polypeptide reads, in one-letter code: Aminopeptidase AmpS (410 aa).

Residues glutamate 250, glutamate 316, glutamate 340, histidine 345, histidine 378, and aspartate 380 each contribute to the a divalent metal cation site.

This sequence belongs to the peptidase M29 family. It depends on Co(2+) as a cofactor. Requires Zn(2+) as cofactor. Mg(2+) is required as a cofactor.

Its function is as follows. Metal-dependent exopeptidase. The protein is Aminopeptidase AmpS (ampS) of Bacillus subtilis (strain 168).